The following is a 446-amino-acid chain: Glutamate-1-semialdehyde 2,1-aminomutase (446 aa).

Residue K278 is modified to N6-(pyridoxal phosphate)lysine.

Belongs to the class-III pyridoxal-phosphate-dependent aminotransferase family. HemL subfamily. Homodimer. It depends on pyridoxal 5'-phosphate as a cofactor.

Its subcellular location is the cytoplasm. The enzyme catalyses (S)-4-amino-5-oxopentanoate = 5-aminolevulinate. Its pathway is porphyrin-containing compound metabolism; protoporphyrin-IX biosynthesis; 5-aminolevulinate from L-glutamyl-tRNA(Glu): step 2/2. The protein is Glutamate-1-semialdehyde 2,1-aminomutase of Deinococcus geothermalis (strain DSM 11300 / CIP 105573 / AG-3a).